Here is a 166-residue protein sequence, read N- to C-terminus: MAKEQQQATDLNEKLIAVNRVSKTVKGGRIFSFTALTVVGDGNGRIGFGYGKAREVPAAIQKSMEKARRNMFTIALNEGTLHHAVKGRHTGSKVYMQPASEGTGIIAGGAMRAVLEVVGVRNVLAKAYGSTNPINVVRATILGLTSVKSPEMVAAKRGLTVEAISE.

Positions 11–74 constitute an S5 DRBM domain; the sequence is LNEKLIAVNR…EKARRNMFTI (64 aa).

Belongs to the universal ribosomal protein uS5 family. In terms of assembly, part of the 30S ribosomal subunit. Contacts proteins S4 and S8.

Its function is as follows. With S4 and S12 plays an important role in translational accuracy. Located at the back of the 30S subunit body where it stabilizes the conformation of the head with respect to the body. In Aliivibrio salmonicida (strain LFI1238) (Vibrio salmonicida (strain LFI1238)), this protein is Small ribosomal subunit protein uS5.